Here is a 272-residue protein sequence, read N- to C-terminus: Diaminopimelate epimerase (272 aa).

Positions 11 and 63 each coordinate substrate. C72 (proton donor) is an active-site residue. Substrate-binding positions include 73–74 (GN), N190, and 208–209 (ER). The active-site Proton acceptor is C217. 218-219 (GT) is a binding site for substrate.

The protein belongs to the diaminopimelate epimerase family. As to quaternary structure, homodimer.

It is found in the cytoplasm. The enzyme catalyses (2S,6S)-2,6-diaminopimelate = meso-2,6-diaminopimelate. It functions in the pathway amino-acid biosynthesis; L-lysine biosynthesis via DAP pathway; DL-2,6-diaminopimelate from LL-2,6-diaminopimelate: step 1/1. Functionally, catalyzes the stereoinversion of LL-2,6-diaminopimelate (L,L-DAP) to meso-diaminopimelate (meso-DAP), a precursor of L-lysine and an essential component of the bacterial peptidoglycan. This Clostridium perfringens (strain 13 / Type A) protein is Diaminopimelate epimerase.